The chain runs to 1014 residues: MNGEGTGIGAPTPALAGFLGKSKDRNASPGNCPWCLAKGQTNALRFYAVNLKETVLLCTNAVCLYPLVSRSLEEVRASLSKGGCKRSISSLPDISDDSCPPKRPREEKLDVLADVSEPCDAEVNDATLPDDTVKTQTFTDQQSAPAETISLDKTEEQPVSIEDIKEQPISHDATEGQPISIDQTEEQPVSILHTEEQPIVLDLIEVKPMSVDHSEEQPICIDNTKERPVSIVHTEEQSIVLDLFEVKPMSIAHTEEKPTSFDHIEEKPMSIAHTEEKPVSLVHTEDQHLSIDQTEEQPISIDPTEEQQPEELPAVSDEDVDLCERKEDCVSSTQDEMEEEVLESSSELVPVHSELFWKNEENMCWLDAMLVMLVHCRTIRGTPCRGIKLSDKLATVPCNDSVVWKLCWRYDKTCAYLQARKKQSEDKVLRVPAGVLVEAERRLSALRLSVFKLLQPTLKCEIGQQETPVFALPLLLRSDKWAQDIFQHTIRWEFKCTCCDFTVNESVEKTLTTLTCIVKDWHPLKANNRTQCNKCEHKNQRRKMVLEKLSSVFALHFVEGLPRKDLTKYGFTFQGFQYSVSTIIQYNKHLQHFVTWVRQSNGFWLELDDLKHPYSPTHKRLPFPSSEFHILFWETDSFKEEHSEVCLPTAPPEVPNAPDEHPPKLSDSVATDTCVISALTVEDTTASSIADTSIGSTTLLDTFEGLTHKDIVTLTLVNSESPKNEPRPMRPGFVSAPRHCPFEASNLLSGIPKTGSRLSTPPIPQKSSLVHKPEVAAAAVSKTHLQPTSLFQRHPSFQSTPIRPPPPLPPAPKPKPSLQYDKHEDLPVKPADMFGGFKTKKLANSQPKQISLPGGLNPSVKKTAGQEPISTTEALRLKLMKKLKAKKKKLAKLNQLLGNGGESVAKPDSTALSSPYSVTSSTTTYDSFDDQFLADLLSPATTVSNLSPDSTGLLEMLNNGQNGEQQNPAVATLAPEATLTCSSSTISPLDEYMQSGMCHTALENADFNSLDIFF.

2 disordered regions span residues 137–158 (TFTD…EEQP) and 275–318 (EEKP…VSDE). Residues 275-289 (EEKPVSLVHTEDQHL) show a composition bias toward basic and acidic residues. The USP domain occupies 355-636 (LFWKNEENMC…EFHILFWETD (282 aa)). The active-site Nucleophile is the Cys364. The interval 364–631 (CWLDAMLVML…PFPSSEFHIL (268 aa)) is SUMO-binding. His592 functions as the Proton acceptor in the catalytic mechanism. Disordered stretches follow at residues 794-823 (HPSF…YDKH) and 844-867 (NSQP…AGQE). Over residues 802 to 815 (IRPPPPLPPAPKPK) the composition is skewed to pro residues.

It belongs to the peptidase C19 family.

It localises to the nucleus. The protein resides in the cajal body. SUMO-specific isopeptidase involved in protein desumoylation. Specifically binds SUMO proteins with a higher affinity for sumo2 and sumo3 which it cleaves more efficiently. Also able to process full-length SUMO proteins to their mature forms. Plays a key role in RNA polymerase-II-mediated snRNA transcription in the Cajal bodies. Is a component of complexes that can bind to U snRNA genes. The sequence is that of SUMO-specific isopeptidase USPL1 (uspl1) from Danio rerio (Zebrafish).